The following is a 340-amino-acid chain: L-threonine 3-dehydrogenase (340 aa).

Position 38 (C38) interacts with Zn(2+). Catalysis depends on charge relay system residues T40 and H43. Residues H63, E64, C93, C96, C99, and C107 each coordinate Zn(2+). Residues I175, D195, R200, 262 to 264 (LGI), and 286 to 287 (IY) each bind NAD(+).

The protein belongs to the zinc-containing alcohol dehydrogenase family. Homotetramer. The cofactor is Zn(2+).

The protein localises to the cytoplasm. It carries out the reaction L-threonine + NAD(+) = (2S)-2-amino-3-oxobutanoate + NADH + H(+). Its pathway is amino-acid degradation; L-threonine degradation via oxydo-reductase pathway; glycine from L-threonine: step 1/2. Functionally, catalyzes the NAD(+)-dependent oxidation of L-threonine to 2-amino-3-ketobutyrate. The protein is L-threonine 3-dehydrogenase of Legionella pneumophila subsp. pneumophila (strain Philadelphia 1 / ATCC 33152 / DSM 7513).